The following is a 117-amino-acid chain: NADH-ubiquinone oxidoreductase chain 3 (117 aa).

Helical transmembrane passes span 1–21 (MLML…VMML), 57–77 (FFLI…LLPM), and 86–106 (LMNW…GLYH).

This sequence belongs to the complex I subunit 3 family.

It is found in the mitochondrion membrane. The enzyme catalyses a ubiquinone + NADH + 5 H(+)(in) = a ubiquinol + NAD(+) + 4 H(+)(out). Core subunit of the mitochondrial membrane respiratory chain NADH dehydrogenase (Complex I) that is believed to belong to the minimal assembly required for catalysis. Complex I functions in the transfer of electrons from NADH to the respiratory chain. The immediate electron acceptor for the enzyme is believed to be ubiquinone. This chain is NADH-ubiquinone oxidoreductase chain 3 (ND3), found in Anopheles quadrimaculatus (Common malaria mosquito).